The chain runs to 460 residues: Elongation factor 1-alpha (460 aa).

G2 carries the post-translational modification N,N,N-trimethylglycine. An N6,N6-dimethyllysine; alternate modification is found at K3. K3 carries the post-translational modification N6-methyllysine; alternate. Residues 6 to 241 (KTHINVVVIG…DSIEPPKRPT (236 aa)) enclose the tr-type G domain. The segment at 15–22 (GHVDSGKS) is G1. 15–22 (GHVDSGKS) contributes to the GTP binding site. K31 bears the N6-methyllysine mark. Residues 71-75 (GITID) form a G2 region. Residue K80 is modified to N6,N6,N6-trimethyllysine. The interval 92 to 95 (DAPG) is G3. Residues 92–96 (DAPGH) and 154–157 (NKMD) each bind GTP. The interval 154-157 (NKMD) is G4. The tract at residues 193–195 (SGF) is G5. An N6,N6-dimethyllysine; alternate modification is found at K317. At K317 the chain carries N6-methyllysine; alternate. Residue K391 is modified to N6-methyllysine.

The protein belongs to the TRAFAC class translation factor GTPase superfamily. Classic translation factor GTPase family. EF-Tu/EF-1A subfamily.

The protein resides in the cytoplasm. In terms of biological role, this protein promotes the GTP-dependent binding of aminoacyl-tRNA to the A-site of ribosomes during protein biosynthesis. In Podospora anserina (Pleurage anserina), this protein is Elongation factor 1-alpha (TEF).